The chain runs to 769 residues: MNEDKLESKWLFSLTESQKLYLLISLIINKKLPEAKFVYKLLDYTKGNWLSLLLRFLPETTDPECYIPYIDIDSHYGNIKASVNDIEPIVLPDEELCQLRLTNMKLWNCKLPSLKDEAEFYSLFSKKIVEETDLVDLAYQLTKNSQAPAEIQQWNSGTFTVFHKLSQFAAVPINLEEMEAATIRDVISLAFPVLDSKNCVFIMDEIITVFINNSSNDPNLISENWDFVWKKLLQLVKTDGLAVVHTLVLNWNTIEPKLFLKLAKVALASCYISDDSSLYSVSLARDITEAIQNKLNFSDVNFGDLLKKPHDFSADGLLSLQNDLTTPSSLSTSLLMEITKAIALLTQLKVPAPTFKTSVSISCSNFDSQIKYLENVLLNALGTIQSPDYKDWHDLYSYIERFKQLSLFFLNISEDAISVVFLKQMLQEKSFLALKQMRNEIGLKDIEPKVLIDCLKTSFYENFRAASNMNKNRGKLALACKVLDVFVDCEPTIDLRRRLNSLVNACSLIQPFKLILEPGKPLSPSLVEANLNPDKLIKTIFSQNPSAYTLYDDILALDIELHKAAGDFDYSQVFTELRRITEHMITLTIDVSLEKDDIEYAKQIVEDRLMTLAEASEDVKFFLYEIAYKIGKFPSNHPNAKVIRLDMLQIAIANAPRQKLDEVVSYWTDFQSNSKVLEENLNTTDVEFHSSKKIKDYEDLEDANFDEEWSKAADLMSDDPENQVLYEGNLNSSLSLNEDPSVSDENLTQKVTSKLTNGLGWVLGVPPRK.

This sequence belongs to the SEC39 family. As to quaternary structure, component of a peripheral membrane protein complex consisting of dsl1, sec39 and tip20.

It localises to the endoplasmic reticulum membrane. Required for protein transport between the Golgi and the endoplasmic reticulum. May contribute to tethering of coatomer-coated retrograde transport vesicles to the ER membrane through interaction with and stabilization of the SNARE complex. This chain is Protein transport protein sec39, found in Schizosaccharomyces pombe (strain 972 / ATCC 24843) (Fission yeast).